A 205-amino-acid polypeptide reads, in one-letter code: Inactive ribonuclease-like protein 9 (205 aa).

A signal peptide spans 1 to 24; that stretch reads MMLITTHSLLLLLLLLQLLQPLQF. 3 disulfide bridges follow: Cys-97/Cys-152, Cys-115/Cys-167, and Cys-122/Cys-129. Residues Asn-130 and Asn-142 are each glycosylated (N-linked (GlcNAc...) asparagine).

The protein belongs to the pancreatic ribonuclease family.

It localises to the secreted. Does not exhibit any ribonuclease activity. The sequence is that of Inactive ribonuclease-like protein 9 (RNASE9) from Cebus capucinus (White-faced sapajou).